A 280-amino-acid chain; its full sequence is 4-diphosphocytidyl-2-C-methyl-D-erythritol kinase (280 aa).

Residue Lys8 is part of the active site. Pro91–Thr101 contributes to the ATP binding site. The active site involves Asp133.

Belongs to the GHMP kinase family. IspE subfamily.

The catalysed reaction is 4-CDP-2-C-methyl-D-erythritol + ATP = 4-CDP-2-C-methyl-D-erythritol 2-phosphate + ADP + H(+). Its pathway is isoprenoid biosynthesis; isopentenyl diphosphate biosynthesis via DXP pathway; isopentenyl diphosphate from 1-deoxy-D-xylulose 5-phosphate: step 3/6. In terms of biological role, catalyzes the phosphorylation of the position 2 hydroxy group of 4-diphosphocytidyl-2C-methyl-D-erythritol. In Clostridium beijerinckii (strain ATCC 51743 / NCIMB 8052) (Clostridium acetobutylicum), this protein is 4-diphosphocytidyl-2-C-methyl-D-erythritol kinase.